A 276-amino-acid polypeptide reads, in one-letter code: Putative pyruvate, phosphate dikinase regulatory protein 1 (276 aa).

157 to 164 (GVSRTSKT) serves as a coordination point for ADP.

Belongs to the pyruvate, phosphate/water dikinase regulatory protein family. PDRP subfamily.

The catalysed reaction is N(tele)-phospho-L-histidyl/L-threonyl-[pyruvate, phosphate dikinase] + ADP = N(tele)-phospho-L-histidyl/O-phospho-L-threonyl-[pyruvate, phosphate dikinase] + AMP + H(+). The enzyme catalyses N(tele)-phospho-L-histidyl/O-phospho-L-threonyl-[pyruvate, phosphate dikinase] + phosphate + H(+) = N(tele)-phospho-L-histidyl/L-threonyl-[pyruvate, phosphate dikinase] + diphosphate. Its function is as follows. Bifunctional serine/threonine kinase and phosphorylase involved in the regulation of the pyruvate, phosphate dikinase (PPDK) by catalyzing its phosphorylation/dephosphorylation. The polypeptide is Putative pyruvate, phosphate dikinase regulatory protein 1 (Staphylococcus haemolyticus (strain JCSC1435)).